Consider the following 348-residue polypeptide: D-alanine--D-alanine ligase (348 aa).

The 203-residue stretch at 132-334 (KRVLESIGIP…YPDLIEELVT (203 aa)) folds into the ATP-grasp domain. 162-217 (LARLTFPIFVKPANMGSSVGISKAQTKVELRKAIQLALTYDSRVLIEQGVIAREIE) provides a ligand contact to ATP. Residues D288, E301, and N303 each contribute to the Mg(2+) site.

This sequence belongs to the D-alanine--D-alanine ligase family. It depends on Mg(2+) as a cofactor. Mn(2+) is required as a cofactor.

The protein localises to the cytoplasm. It carries out the reaction 2 D-alanine + ATP = D-alanyl-D-alanine + ADP + phosphate + H(+). It functions in the pathway cell wall biogenesis; peptidoglycan biosynthesis. In terms of biological role, cell wall formation. The polypeptide is D-alanine--D-alanine ligase (Streptococcus pyogenes serotype M4 (strain MGAS10750)).